The following is a 659-amino-acid chain: tRNA uridine 5-carboxymethylaminomethyl modification enzyme MnmG (659 aa).

13–18 (GGGHAG) contacts FAD. 281 to 295 (GPRYCPSVEDKINRF) provides a ligand contact to NAD(+).

It belongs to the MnmG family. As to quaternary structure, homodimer. Heterotetramer of two MnmE and two MnmG subunits. The cofactor is FAD.

It localises to the cytoplasm. Functionally, NAD-binding protein involved in the addition of a carboxymethylaminomethyl (cmnm) group at the wobble position (U34) of certain tRNAs, forming tRNA-cmnm(5)s(2)U34. The protein is tRNA uridine 5-carboxymethylaminomethyl modification enzyme MnmG of Delftia acidovorans (strain DSM 14801 / SPH-1).